Reading from the N-terminus, the 361-residue chain is MRHVQEARAVPAEHEARPAPVTMPANGSPYRLGAALLQSLAQEMNALAEQASALLSMPPESLSLDADAFAQIARRNVPRWHFAMLNDTERNTALMTALERGIPAGATVLDIGSGSGLLAMAAARAGAGRVFTCEMNPLLAEIARNVISAHGMSDVITVIGKPSTALDPVRDLGGPVDVLVSEIVDCGLIGEGLLPSVRHAREHLLKPDGIMLPSAARLHGRLVSSDEVLKLNQVTTAGGFDVSLMNTVATRGHFPVRLDTWPHRFLSEAAPLVEFDLARSALEPGERPLALTATADGEVQALAVWFELDMGSGITLSNPPDNPRSHWMQGWVPLDKPVPVKAGETLALRLGWSDFTLRVSI.

The span at 1–17 (MRHVQEARAVPAEHEAR) shows a compositional bias: basic and acidic residues. Residues 1–24 (MRHVQEARAVPAEHEARPAPVTMP) are disordered. The region spanning 65-361 (DADAFAQIAR…WSDFTLRVSI (297 aa)) is the SAM-dependent MTase PRMT-type domain.

Belongs to the class I-like SAM-binding methyltransferase superfamily. Protein arginine N-methyltransferase family.

It catalyses the reaction L-arginine + S-adenosyl-L-methionine = N(omega)-methyl-L-arginine + S-adenosyl-L-homocysteine + H(+). Its pathway is antibiotic biosynthesis. Functionally, involved in the biosynthesis of the glucosamine-nitrosourea antibiotic streptozotocin (SZN). Catalyzes the conversion of L-arginine to N(omega)-methyl-L-arginine (L-NMA), using S-adenosyl-L-methionine (SAM) as a methyl donor. This is Arginine N(omega)-methyltransferase from Streptomyces achromogenes subsp. streptozoticus.